The sequence spans 463 residues: ATP-dependent protease ATPase subunit HslU (463 aa).

ATP is bound by residues Ile-19, 61-66 (GVGKTE), Asp-277, Glu-341, and Arg-413.

It belongs to the ClpX chaperone family. HslU subfamily. In terms of assembly, a double ring-shaped homohexamer of HslV is capped on each side by a ring-shaped HslU homohexamer. The assembly of the HslU/HslV complex is dependent on binding of ATP.

Its subcellular location is the cytoplasm. Functionally, ATPase subunit of a proteasome-like degradation complex; this subunit has chaperone activity. The binding of ATP and its subsequent hydrolysis by HslU are essential for unfolding of protein substrates subsequently hydrolyzed by HslV. HslU recognizes the N-terminal part of its protein substrates and unfolds these before they are guided to HslV for hydrolysis. This is ATP-dependent protease ATPase subunit HslU from Bacillus cereus (strain 03BB102).